The primary structure comprises 940 residues: UvrABC system protein A (940 aa).

32 to 39 is an ATP binding site; that stretch reads GLSGSGKS. A C4-type zinc finger spans residues 252–279; sequence CIDCGISIDEISPRLFSFNSPFGKCDYC. ABC transporter domains follow at residues 309-589 and 609-937; these read WANT…EGSL and SNGK…HYLK. Position 641-648 (641-648) interacts with ATP; the sequence is GVSGSGKS. The segment at 740-766 adopts a C4-type zinc-finger fold; sequence CEACKGDGIIKIEMQFLSDVYVPCEIC.

This sequence belongs to the ABC transporter superfamily. UvrA family. As to quaternary structure, forms a heterotetramer with UvrB during the search for lesions.

Its subcellular location is the cytoplasm. Its function is as follows. The UvrABC repair system catalyzes the recognition and processing of DNA lesions. UvrA is an ATPase and a DNA-binding protein. A damage recognition complex composed of 2 UvrA and 2 UvrB subunits scans DNA for abnormalities. When the presence of a lesion has been verified by UvrB, the UvrA molecules dissociate. This chain is UvrABC system protein A, found in Clostridium tetani (strain Massachusetts / E88).